The chain runs to 519 residues: Sensor protein RprX (519 aa).

The next 2 membrane-spanning stretches (helical) occupy residues 5–25 (TIWILGIIMGLSFLSLLYLQV) and 260–280 (IPSMIFTIVLLITFIFTIYIV). One can recognise a Histidine kinase domain in the interval 296–517 (NMTHEFKTPI…KFIIALPLLK (222 aa)). H299 carries the post-translational modification Phosphohistidine; by autocatalysis.

It is found in the cell membrane. The enzyme catalyses ATP + protein L-histidine = ADP + protein N-phospho-L-histidine.. In terms of biological role, member of the two-component regulatory system RprX/RprY. May activate RprY by phosphorylation. The sequence is that of Sensor protein RprX (rprX) from Bacteroides fragilis (strain YCH46).